A 366-amino-acid polypeptide reads, in one-letter code: Carbamoyl phosphate synthase small chain (366 aa).

The interval 1 to 174 is CPSase; sequence MQEIPAILVL…GERYTVDNPD (174 aa). Ser48, Gly226, and Gly228 together coordinate L-glutamine. Positions 178 to 366 constitute a Glutamine amidotransferase type-1 domain; the sequence is HVVAFDYGIK…FTELMERLKN (189 aa). Cys256 functions as the Nucleophile in the catalytic mechanism. L-glutamine contacts are provided by Leu257, Gln260, Asn298, Gly300, and Phe301. Residues His340 and Glu342 contribute to the active site.

This sequence belongs to the CarA family. In terms of assembly, composed of two chains; the small (or glutamine) chain promotes the hydrolysis of glutamine to ammonia, which is used by the large (or ammonia) chain to synthesize carbamoyl phosphate. Tetramer of heterodimers (alpha,beta)4.

The catalysed reaction is hydrogencarbonate + L-glutamine + 2 ATP + H2O = carbamoyl phosphate + L-glutamate + 2 ADP + phosphate + 2 H(+). It catalyses the reaction L-glutamine + H2O = L-glutamate + NH4(+). It functions in the pathway amino-acid biosynthesis; L-arginine biosynthesis; carbamoyl phosphate from bicarbonate: step 1/1. The protein operates within pyrimidine metabolism; UMP biosynthesis via de novo pathway; (S)-dihydroorotate from bicarbonate: step 1/3. Small subunit of the glutamine-dependent carbamoyl phosphate synthetase (CPSase). CPSase catalyzes the formation of carbamoyl phosphate from the ammonia moiety of glutamine, carbonate, and phosphate donated by ATP, constituting the first step of 2 biosynthetic pathways, one leading to arginine and/or urea and the other to pyrimidine nucleotides. The small subunit (glutamine amidotransferase) binds and cleaves glutamine to supply the large subunit with the substrate ammonia. This chain is Carbamoyl phosphate synthase small chain, found in Chlorobaculum tepidum (strain ATCC 49652 / DSM 12025 / NBRC 103806 / TLS) (Chlorobium tepidum).